The chain runs to 204 residues: GTP cyclohydrolase-2 (204 aa).

A GTP-binding site is contributed by 49 to 53 (RIHSE). Residues Cys-54, Cys-65, and Cys-67 each coordinate Zn(2+). Residues Gln-70, 92-94 (EGR), and Thr-114 each bind GTP. Catalysis depends on Asp-126, which acts as the Proton acceptor. Arg-128 serves as the catalytic Nucleophile. 2 residues coordinate GTP: Thr-149 and Lys-154.

Belongs to the GTP cyclohydrolase II family. Zn(2+) is required as a cofactor.

The catalysed reaction is GTP + 4 H2O = 2,5-diamino-6-hydroxy-4-(5-phosphoribosylamino)-pyrimidine + formate + 2 phosphate + 3 H(+). The protein operates within cofactor biosynthesis; riboflavin biosynthesis; 5-amino-6-(D-ribitylamino)uracil from GTP: step 1/4. Functionally, catalyzes the conversion of GTP to 2,5-diamino-6-ribosylamino-4(3H)-pyrimidinone 5'-phosphate (DARP), formate and pyrophosphate. In Shewanella baltica (strain OS155 / ATCC BAA-1091), this protein is GTP cyclohydrolase-2.